Here is a 212-residue protein sequence, read N- to C-terminus: Small ribosomal subunit protein uS3 (212 aa).

Positions 38 to 106 (IRKFVKKTLY…EFAIEVNEIR (69 aa)) constitute a KH type-2 domain.

This sequence belongs to the universal ribosomal protein uS3 family. In terms of assembly, part of the 30S ribosomal subunit. Forms a tight complex with proteins S10 and S14.

In terms of biological role, binds the lower part of the 30S subunit head. Binds mRNA in the 70S ribosome, positioning it for translation. This is Small ribosomal subunit protein uS3 from Nitratidesulfovibrio vulgaris (strain ATCC 29579 / DSM 644 / CCUG 34227 / NCIMB 8303 / VKM B-1760 / Hildenborough) (Desulfovibrio vulgaris).